Reading from the N-terminus, the 161-residue chain is Peripheral myelin protein 22 (161 aa).

Position 1 (M1) is a topological domain, cytoplasmic. A helical transmembrane segment spans residues 2–31; the sequence is LLLLLGILFLHIAVLVLLFVSTIVSQWLVG. Residues 32-64 are Extracellular-facing; sequence NGHTTDLWQNCTTSALGAVQHCYSSSVSEWLQS. A glycan (N-linked (GlcNAc...) asparagine) is linked at N41. A helical membrane pass occupies residues 65-91; the sequence is VQATMILSVIFSVLALFLFFCQLFTLT. Over 92–95 the chain is Cytoplasmic; sequence KGGR. A helical transmembrane segment spans residues 96 to 119; it reads FYITGFFQILAGLCVMSAAAIYTV. Residues 120–133 are Extracellular-facing; that stretch reads RHSEWHVNTDYSYG. The chain crosses the membrane as a helical span at residues 134–156; it reads FAYILAWVAFPLALLSGIIYVIL. Over 157-160 the chain is Cytoplasmic; sequence RKRE.

The protein belongs to the PMP-22/EMP/MP20 family. Ubiquitinated by the DCX(DCAF13) E3 ubiquitin ligase complex, leading to its degradation. In terms of tissue distribution, schwann cells of the peripheral nervous system. Expressed at growth arrest of mammalian fibroblasts.

The protein resides in the cell membrane. Might be involved in growth regulation, and in myelinization in the peripheral nervous system. This Mus musculus (Mouse) protein is Peripheral myelin protein 22 (Pmp22).